Here is a 230-residue protein sequence, read N- to C-terminus: Leucyl/phenylalanyl-tRNA--protein transferase (230 aa).

The protein belongs to the L/F-transferase family.

Its subcellular location is the cytoplasm. It catalyses the reaction N-terminal L-lysyl-[protein] + L-leucyl-tRNA(Leu) = N-terminal L-leucyl-L-lysyl-[protein] + tRNA(Leu) + H(+). It carries out the reaction N-terminal L-arginyl-[protein] + L-leucyl-tRNA(Leu) = N-terminal L-leucyl-L-arginyl-[protein] + tRNA(Leu) + H(+). The catalysed reaction is L-phenylalanyl-tRNA(Phe) + an N-terminal L-alpha-aminoacyl-[protein] = an N-terminal L-phenylalanyl-L-alpha-aminoacyl-[protein] + tRNA(Phe). In terms of biological role, functions in the N-end rule pathway of protein degradation where it conjugates Leu, Phe and, less efficiently, Met from aminoacyl-tRNAs to the N-termini of proteins containing an N-terminal arginine or lysine. The chain is Leucyl/phenylalanyl-tRNA--protein transferase from Syntrophotalea carbinolica (strain DSM 2380 / NBRC 103641 / GraBd1) (Pelobacter carbinolicus).